Reading from the N-terminus, the 320-residue chain is Cytochrome f (320 aa).

Positions 1–35 (MHTKNLFYSRPQQITQYLSAFLMMVILTRTSISSA) are cleaved as a signal peptide. Residues Tyr36, Cys56, Cys59, and His60 each contribute to the heme site. The helical transmembrane segment at 286–306 (VQVLLFFFASIILAQIFLVLK) threads the bilayer.

This sequence belongs to the cytochrome f family. In terms of assembly, the 4 large subunits of the cytochrome b6-f complex are cytochrome b6, subunit IV (17 kDa polypeptide, petD), cytochrome f and the Rieske protein, while the 4 small subunits are PetG, PetL, PetM and PetN. The complex functions as a dimer. It depends on heme as a cofactor.

Its subcellular location is the plastid thylakoid membrane. In terms of biological role, component of the cytochrome b6-f complex, which mediates electron transfer between photosystem II (PSII) and photosystem I (PSI), cyclic electron flow around PSI, and state transitions. The protein is Cytochrome f of Cuscuta obtusiflora (Peruvian dodder).